A 386-amino-acid chain; its full sequence is SET and MYND domain-containing protein DDB_G0273589 (386 aa).

Residues asparagine 6–isoleucine 294 enclose the SET domain. Residues cysteine 51 to cysteine 94 form an MYND-type zinc finger. The stretch at asparagine 136–glutamine 171 forms a coiled coil.

This sequence belongs to the class V-like SAM-binding methyltransferase superfamily.

Its function is as follows. Probable methyltransferase. The protein is SET and MYND domain-containing protein DDB_G0273589 of Dictyostelium discoideum (Social amoeba).